The sequence spans 311 residues: MTQPRHFIDLWKLDGATLRLLLDDAHARKAARKGWPQGKVDADAPAKDRVLSMIFQKNSTRTRFSFDAAMRQLGGSAIISTASDMQLGRGETIEDTAKVLSRMVDAVMIRANSHADVERFAQVSTVPIINGLTDKSHPCQIMADILTIEEHRGPIAGKTIAWVGDGNNVCSSFIHAAPLLGFELKIACPAVYHADLHDLARAEGLQGKVSMTTDPKAAVSGADVVVADTWVSMGDTDHDERLAALEPYQVDDRLMDLAAGNGVFLHCLPAHRGEEVTDAVLDGPRSLVWDEAENRIHAQKSVLAWCFGAIG.

Carbamoyl phosphate is bound by residues 59–62 (STRT), glutamine 86, arginine 110, and 137–140 (HPCQ). Residues asparagine 168, aspartate 228, and 232-233 (SM) contribute to the L-ornithine site. Carbamoyl phosphate is bound by residues 267-268 (CL) and arginine 295.

The protein belongs to the aspartate/ornithine carbamoyltransferase superfamily. OTCase family.

It is found in the cytoplasm. The enzyme catalyses carbamoyl phosphate + L-ornithine = L-citrulline + phosphate + H(+). Its pathway is amino-acid biosynthesis; L-arginine biosynthesis; L-arginine from L-ornithine and carbamoyl phosphate: step 1/3. In terms of biological role, reversibly catalyzes the transfer of the carbamoyl group from carbamoyl phosphate (CP) to the N(epsilon) atom of ornithine (ORN) to produce L-citrulline. This is Ornithine carbamoyltransferase from Caulobacter vibrioides (strain ATCC 19089 / CIP 103742 / CB 15) (Caulobacter crescentus).